The sequence spans 281 residues: Diaminopimelate epimerase (281 aa).

Positions 11 and 65 each coordinate substrate. The active-site Proton donor is cysteine 74. Substrate contacts are provided by residues 75–76 (GN), asparagine 164, asparagine 197, and 215–216 (ER). The active-site Proton acceptor is the cysteine 224. 225-226 (GT) lines the substrate pocket.

The protein belongs to the diaminopimelate epimerase family. Homodimer.

Its subcellular location is the cytoplasm. It carries out the reaction (2S,6S)-2,6-diaminopimelate = meso-2,6-diaminopimelate. Its pathway is amino-acid biosynthesis; L-lysine biosynthesis via DAP pathway; DL-2,6-diaminopimelate from LL-2,6-diaminopimelate: step 1/1. Catalyzes the stereoinversion of LL-2,6-diaminopimelate (L,L-DAP) to meso-diaminopimelate (meso-DAP), a precursor of L-lysine and an essential component of the bacterial peptidoglycan. The chain is Diaminopimelate epimerase from Heliobacterium modesticaldum (strain ATCC 51547 / Ice1).